The sequence spans 580 residues: MEPRVVTALLLSLAAALCSGISSINPDRSGEGRCQAIEIPMCKDIGYNMTRMPNLMGHENQKEAAIQLHEFAPLVEYGCHSHLKFFLCSLYAPMCTEQVSTPIPACRVMCEQARLKCSPIMEQFNFKWPDSLDCSKLPNKNDPNYLCMEAPNNGTDEAPRSSSILPPIFRPQRPNSGHEMYPKDPKGRSSCENSGKFHHVEKSASCAPLCSSSVDVYWSKNDKKFAFIWIAIWSLLCFFSSAFTVLTFLVDPLRFKYPERPIIFLSMCYCVYSVGYIIRLFAGADSIACDRDSGQLYVIQEGLESTGCTIVFLILYYFGMASSLWWVILTLTWFLAAGKKWGHEAIEANSSYFHLAAWAIPAVKTIMILVMRRVAGDELTGVCYVGSMDVNALTGFVLIPLACYLIIGTSFILSGFVALFHIRRVMKTGGENTDKLEKLMVRIGVFSVLYTVPATCVIACYFYERLNMDFWKILATQDKCKMDSQTKTLDCTMTSSIPAVEIFMVKIFMLLVVGITSGMWIWTSKTVQSWQNVFSKSLKKRNRNKPASVITSAGIYKKPQQPPKIHHGKYESALRSPTCV.

The first 20 residues, methionine 1–glycine 20, serve as a signal peptide directing secretion. Over isoleucine 21–lysine 224 the chain is Extracellular. An FZ domain is found at serine 29–alanine 150. 5 disulfides stabilise this stretch: cysteine 34-cysteine 95, cysteine 42-cysteine 88, cysteine 79-cysteine 117, cysteine 106-cysteine 147, and cysteine 110-cysteine 134. Residue asparagine 48 is glycosylated (N-linked (GlcNAc...) asparagine). A glycan (N-linked (GlcNAc...) asparagine) is linked at asparagine 153. The segment at arginine 173–serine 194 is disordered. The segment covering methionine 180–serine 189 has biased composition (basic and acidic residues). A helical transmembrane segment spans residues phenylalanine 225 to valine 245. The Cytoplasmic segment spans residues leucine 246–proline 261. A helical membrane pass occupies residues isoleucine 262–alanine 282. The Extracellular segment spans residues glycine 283 to threonine 309. Residues isoleucine 310–threonine 330 traverse the membrane as a helical segment. At leucine 331 to serine 350 the chain is on the cytoplasmic side. Residues serine 351–methionine 371 traverse the membrane as a helical segment. Topologically, residues arginine 372–alanine 392 are extracellular. The helical transmembrane segment at leucine 393–leucine 413 threads the bilayer. Residues serine 414–arginine 442 lie on the Cytoplasmic side of the membrane. A helical transmembrane segment spans residues isoleucine 443–tyrosine 463. At glutamate 464 to glutamate 501 the chain is on the extracellular side. The chain crosses the membrane as a helical span at residues isoleucine 502–tryptophan 522. Residues threonine 523–valine 580 are Cytoplasmic-facing. Residues lysine 525–tryptophan 530 carry the Lys-Thr-X-X-X-Trp motif, mediates interaction with the PDZ domain of Dvl family members motif. The tract at residues lysine 558–valine 580 is disordered. The PDZ-binding motif lies at threonine 578 to valine 580.

This sequence belongs to the G-protein coupled receptor Fz/Smo family. Expressed in liver, lung, brain, testis, heart and ovary.

The protein resides in the cell membrane. Functionally, receptor for Wnt proteins. Most of frizzled receptors are coupled to the beta-catenin canonical signaling pathway, which leads to the activation of disheveled proteins, inhibition of GSK-3 kinase, nuclear accumulation of beta-catenin and activation of Wnt target genes. A second signaling pathway involving PKC and calcium fluxes has been seen for some family members, but it is not yet clear if it represents a distinct pathway or if it can be integrated in the canonical pathway, as PKC seems to be required for Wnt-mediated inactivation of GSK-3 kinase. Both pathways seem to involve interactions with G-proteins. May be involved in transduction and intercellular transmission of polarity information during tissue morphogenesis and/or in differentiated tissues. Activated by Wnt8. Could have an antagonizing activity in the morphogenesis during development. The chain is Frizzled-10-B (fzd10-b) from Xenopus laevis (African clawed frog).